A 280-amino-acid polypeptide reads, in one-letter code: Acetyl-coenzyme A carboxylase carboxyl transferase subunit beta (280 aa).

The region spanning 28–280 is the CoA carboxyltransferase N-terminal domain; that stretch reads IMTKCPSCRT…TLTKLLAMHQ (253 aa). Zn(2+) contacts are provided by C32, C35, C51, and C54. The C4-type zinc finger occupies 32–54; it reads CPSCRTIMYTKDLKKNLSVCRTC.

It belongs to the AccD/PCCB family. As to quaternary structure, acetyl-CoA carboxylase is a heterohexamer composed of biotin carboxyl carrier protein (AccB), biotin carboxylase (AccC) and two subunits each of ACCase subunit alpha (AccA) and ACCase subunit beta (AccD). It depends on Zn(2+) as a cofactor.

Its subcellular location is the cytoplasm. It carries out the reaction N(6)-carboxybiotinyl-L-lysyl-[protein] + acetyl-CoA = N(6)-biotinyl-L-lysyl-[protein] + malonyl-CoA. It functions in the pathway lipid metabolism; malonyl-CoA biosynthesis; malonyl-CoA from acetyl-CoA: step 1/1. Functionally, component of the acetyl coenzyme A carboxylase (ACC) complex. Biotin carboxylase (BC) catalyzes the carboxylation of biotin on its carrier protein (BCCP) and then the CO(2) group is transferred by the transcarboxylase to acetyl-CoA to form malonyl-CoA. This is Acetyl-coenzyme A carboxylase carboxyl transferase subunit beta from Shouchella clausii (strain KSM-K16) (Alkalihalobacillus clausii).